The following is a 147-amino-acid chain: Hemoglobin subunit epsilon-1 (147 aa).

The Globin domain maps to His-3 to His-147. The heme b site is built by His-64 and His-93.

The protein belongs to the globin family. As to quaternary structure, heterotetramer of two epsilon chains and two alpha chains. Red blood cells.

Beta-type chain found in early embryos. The polypeptide is Hemoglobin subunit epsilon-1 (HBE1) (Capra hircus (Goat)).